We begin with the raw amino-acid sequence, 148 residues long: Ribonuclease pancreatic (148 aa).

An N-terminal signal peptide occupies residues 1–25 (MGLEKSLILLPLLVLVFGWVQPSLG). Lys32 and Arg35 together coordinate substrate. The active-site Proton acceptor is His37. Intrachain disulfides connect Cys50–Cys108, Cys64–Cys119, Cys82–Cys134, and Cys89–Cys96. Asn58 carries an N-linked (GlcNAc...) asparagine glycan. Residue 65-69 (KPVNT) participates in substrate binding. The N-linked (GlcNAc...) asparagine glycan is linked to Asn86. Positions 90 and 109 each coordinate substrate. Residue His143 is the Proton donor of the active site.

The protein belongs to the pancreatic ribonuclease family. As to quaternary structure, monomer. Interacts with and forms tight 1:1 complexes with RNH1. Dimerization of two such complexes may occur. Interaction with RNH1 inhibits this protein. Pancreas.

It localises to the secreted. The enzyme catalyses an [RNA] containing cytidine + H2O = an [RNA]-3'-cytidine-3'-phosphate + a 5'-hydroxy-ribonucleotide-3'-[RNA].. It catalyses the reaction an [RNA] containing uridine + H2O = an [RNA]-3'-uridine-3'-phosphate + a 5'-hydroxy-ribonucleotide-3'-[RNA].. Endonuclease that catalyzes the cleavage of RNA on the 3' side of pyrimidine nucleotides. Acts on single-stranded and double-stranded RNA. This is Ribonuclease pancreatic (RNASE1) from Myodes glareolus (Bank vole).